We begin with the raw amino-acid sequence, 326 residues long: Glycerol-3-phosphate dehydrogenase [NAD(P)+] (326 aa).

NADPH contacts are provided by W13, R33, and K107. Sn-glycerol 3-phosphate contacts are provided by K107, G135, and S137. A139 serves as a coordination point for NADPH. K190, D243, S253, R254, and N255 together coordinate sn-glycerol 3-phosphate. K190 (proton acceptor) is an active-site residue. Position 254 (R254) interacts with NADPH. L273 and E275 together coordinate NADPH.

Belongs to the NAD-dependent glycerol-3-phosphate dehydrogenase family.

The protein localises to the cytoplasm. The catalysed reaction is sn-glycerol 3-phosphate + NAD(+) = dihydroxyacetone phosphate + NADH + H(+). The enzyme catalyses sn-glycerol 3-phosphate + NADP(+) = dihydroxyacetone phosphate + NADPH + H(+). The protein operates within membrane lipid metabolism; glycerophospholipid metabolism. Catalyzes the reduction of the glycolytic intermediate dihydroxyacetone phosphate (DHAP) to sn-glycerol 3-phosphate (G3P), the key precursor for phospholipid synthesis. This Brucella ovis (strain ATCC 25840 / 63/290 / NCTC 10512) protein is Glycerol-3-phosphate dehydrogenase [NAD(P)+].